The following is a 293-amino-acid chain: Fructose-bisphosphate aldolase class 1 (293 aa).

Catalysis depends on E176, which acts as the Proton acceptor. The active-site Schiff-base intermediate with dihydroxyacetone-P is K211.

This sequence belongs to the class I fructose-bisphosphate aldolase family.

The enzyme catalyses beta-D-fructose 1,6-bisphosphate = D-glyceraldehyde 3-phosphate + dihydroxyacetone phosphate. It participates in carbohydrate degradation; glycolysis; D-glyceraldehyde 3-phosphate and glycerone phosphate from D-glucose: step 4/4. This Porphyromonas gingivalis (strain ATCC 33277 / DSM 20709 / CIP 103683 / JCM 12257 / NCTC 11834 / 2561) protein is Fructose-bisphosphate aldolase class 1.